A 396-amino-acid chain; its full sequence is Multidrug resistance protein MdtL (396 aa).

Residues 1-4 lie on the Cytoplasmic side of the membrane; the sequence is MFRY. A helical transmembrane segment spans residues 5–25; sequence LLCCFGLVLMYPTGIDMYLVG. Topologically, residues 26–41 are periplasmic; it reads LPQIANQLGATEAQLH. Residues 42–62 form a helical membrane-spanning segment; the sequence is IAFSVYLAGMATTMLFAGSLA. Residues 63-64 lie on the Cytoplasmic side of the membrane; sequence DR. Residues 65–85 form a helical membrane-spanning segment; the sequence is IGRKPITLFSALLFALASYFA. At 86–92 the chain is on the periplasmic side; that stretch reads ARSQSSD. The helical transmembrane segment at 93–113 threads the bilayer; the sequence is LFLVARFVQGVGAGCCYVVAF. Residues 114 to 131 are Cytoplasmic-facing; it reads AILRDALDDKRRAKVLSM. A helical membrane pass occupies residues 132–152; sequence VNGVTCIIPVIAPVIGHLIML. The Periplasmic portion of the chain corresponds to 153–157; that stretch reads RFPWP. Residues 158 to 178 form a helical membrane-spanning segment; the sequence is SLFYTMAVMGLLVFGLCLFVL. Over 179 to 209 the chain is Cytoplasmic; sequence RETYSKASFHSQTLPRVQTESFKQGFFISRV. Residues 210–230 traverse the membrane as a helical segment; sequence VITTLGVTTILSYVNVSPMLI. Topologically, residues 231–242 are periplasmic; that stretch reads MGQMGFDRGQYS. A helical transmembrane segment spans residues 243–263; sequence NTMAMTALVSMLASFSTPFLL. The Cytoplasmic segment spans residues 264–277; that stretch reads NQFKEKSLILFSQT. A run of 2 helical transmembrane segments spans residues 278 to 298 and 299 to 319; these read LFAA…GQLF and NLLG…VTMS. Residues 320–333 lie on the Cytoplasmic side of the membrane; sequence QALSPFVARAGVAS. The helical transmembrane segment at 334-354 threads the bilayer; sequence SLLGIAQVCTSALYIWVMGLL. The Periplasmic segment spans residues 355–360; sequence EVSAIN. Residues 361–381 traverse the membrane as a helical segment; that stretch reads ILLAILAVGALISITLMLAVP. At 382–396 the chain is on the cytoplasmic side; it reads KLSEMVANEQIPESA.

It belongs to the major facilitator superfamily. DHA1 family. MdtL (TC 2.A.1.2.22) subfamily.

It is found in the cell inner membrane. The sequence is that of Multidrug resistance protein MdtL from Shewanella sp. (strain ANA-3).